A 55-amino-acid chain; its full sequence is Large ribosomal subunit protein bL33 (55 aa).

This sequence belongs to the bacterial ribosomal protein bL33 family.

The sequence is that of Large ribosomal subunit protein bL33 from Buchnera aphidicola subsp. Acyrthosiphon pisum (strain 5A).